Here is a 227-residue protein sequence, read N- to C-terminus: Glutathione S-transferase U7 (227 aa).

Residues 8–87 (EEVKLLGMWA…YIDETWRDNP (80 aa)) form the GST N-terminal domain. Glutathione contacts are provided by residues 18 to 19 (SP), 44 to 45 (NK), 58 to 59 (MI), and 71 to 72 (ES). The GST C-terminal domain maps to 92-215 (DPYERTMARF…PPEDEHLKYI (124 aa)).

It belongs to the GST superfamily. Tau family.

The protein localises to the cytoplasm. It localises to the cytosol. It carries out the reaction RX + glutathione = an S-substituted glutathione + a halide anion + H(+). In terms of biological role, may be involved in the conjugation of reduced glutathione to a wide number of exogenous and endogenous hydrophobic electrophiles and have a detoxification role against certain herbicides. The chain is Glutathione S-transferase U7 (GSTU7) from Arabidopsis thaliana (Mouse-ear cress).